Reading from the N-terminus, the 563-residue chain is Urocanate hydratase (563 aa).

NAD(+)-binding positions include 53 to 54, Q131, 177 to 179, E197, R202, 243 to 244, 264 to 268, 274 to 275, and Y323; these read GG, GMG, NA, QTSAH, and YL. Residue C411 is part of the active site. Position 493 (G493) interacts with NAD(+).

It belongs to the urocanase family. It depends on NAD(+) as a cofactor.

The protein resides in the cytoplasm. It catalyses the reaction 4-imidazolone-5-propanoate = trans-urocanate + H2O. It participates in amino-acid degradation; L-histidine degradation into L-glutamate; N-formimidoyl-L-glutamate from L-histidine: step 2/3. Its function is as follows. Catalyzes the conversion of urocanate to 4-imidazolone-5-propionate. The sequence is that of Urocanate hydratase from Yersinia pestis bv. Antiqua (strain Antiqua).